We begin with the raw amino-acid sequence, 247 residues long: ATP synthase subunit a, chloroplastic (247 aa).

The next 5 helical transmembrane spans lie at 38–58 (QVLI…ILVV), 95–115 (VPFI…GALL), 134–154 (INTT…AGIS), 199–219 (LVVV…VMFL), and 220–240 (GLFT…AYIG).

Belongs to the ATPase A chain family. As to quaternary structure, F-type ATPases have 2 components, CF(1) - the catalytic core - and CF(0) - the membrane proton channel. CF(1) has five subunits: alpha(3), beta(3), gamma(1), delta(1), epsilon(1). CF(0) has four main subunits: a, b, b' and c.

The protein resides in the plastid. Its subcellular location is the chloroplast thylakoid membrane. Functionally, key component of the proton channel; it plays a direct role in the translocation of protons across the membrane. In Pisum sativum (Garden pea), this protein is ATP synthase subunit a, chloroplastic.